A 338-amino-acid polypeptide reads, in one-letter code: Ferredoxin--NADP reductase (338 aa).

Positions 35, 43, 48, 88, 122, 289, and 330 each coordinate FAD.

This sequence belongs to the ferredoxin--NADP reductase type 2 family. In terms of assembly, homodimer. It depends on FAD as a cofactor.

It carries out the reaction 2 reduced [2Fe-2S]-[ferredoxin] + NADP(+) + H(+) = 2 oxidized [2Fe-2S]-[ferredoxin] + NADPH. The protein is Ferredoxin--NADP reductase of Ehrlichia chaffeensis (strain ATCC CRL-10679 / Arkansas).